We begin with the raw amino-acid sequence, 330 residues long: MKVLWAALVVALLAGCWADVEPESPLQGKPEPELEPELEPKRELEQEVEAEAGWQAGQPWELALARFWDYLRWVQTLSDQVQEDMLSNQVTQELTTLMEETMKEIKAYRAELEEQLGPMASETQARVAKELQAAQARLRSDMEDVRTRLTQYRGEVQAMLGQSTEELRARFASHMRKLRKRVLRDAEDLQKRLAVYRAGVREGAERSVSSIRERLWPLLEQARTRHANLATQPLRERVDALGQQLRGRLEEVGSRARSHLDEVREQMEEVQAKMEEQANQMRQQVEAFQARLKSWFEPLVEDMQRQWAGLVEKVQVAVGTSPTTPPLETK.

The first 18 residues, 1-18 (MKVLWAALVVALLAGCWA), serve as a signal peptide directing secretion. The interval 21–43 (EPESPLQGKPEPELEPELEPKRE) is disordered. 7 consecutive repeat copies span residues 96–117 (TLMEETMKEIKAYRAELEEQLG), 118–139 (PMASETQARVAKELQAAQARLR), 140–161 (SDMEDVRTRLTQYRGEVQAMLG), 162–183 (QSTEELRARFASHMRKLRKRVL), 184–205 (RDAEDLQKRLAVYRAGVREGAE), 206–227 (RSVSSIRERLWPLLEQARTRHA), and 247–268 (GRLEEVGSRARSHLDEVREQME). The interval 96–268 (TLMEETMKEI…HLDEVREQME (173 aa)) is 7 X 22 AA approximate tandem repeats. M159 carries the methionine sulfoxide modification. A Phosphoserine modification is found at S163. The tract at residues 174 to 184 (HMRKLRKRVLR) is LDL and other lipoprotein receptors binding. 178–181 (LRKR) contacts heparin. The segment at 226-303 (HANLATQPLR…SWFEPLVEDM (78 aa)) is lipid-binding and lipoprotein association. 242–249 (GQQLRGRL) serves as a coordination point for heparin. The interval 279–330 (NQMRQQVEAFQARLKSWFEPLVEDMQRQWAGLVEKVQVAVGTSPTTPPLETK) is homooligomerization. Positions 291–303 (RLKSWFEPLVEDM) are specificity for association with VLDL.

This sequence belongs to the apolipoprotein A1/A4/E family. As to quaternary structure, homotetramer. May interact with ABCA1; functionally associated with ABCA1 in the biogenesis of HDLs. May interact with APP/A4 amyloid-beta peptide; the interaction is extremely stable in vitro but its physiological significance is unclear. May interact with MAPT. May interact with MAP2. In the cerebrospinal fluid, interacts with secreted SORL1. Interacts with PMEL; this allows the loading of PMEL luminal fragment on ILVs to induce fibril nucleation. Post-translationally, APOE exists as multiple glycosylated and sialylated glycoforms within cells and in plasma. The extent of glycosylation and sialylation are tissue and context specific. In terms of processing, glycated in plasma VLDL. Phosphorylated by FAM20C in the extracellular medium.

It is found in the secreted. The protein resides in the extracellular space. The protein localises to the extracellular matrix. It localises to the extracellular vesicle. Its subcellular location is the endosome. It is found in the multivesicular body. In terms of biological role, APOE is an apolipoprotein, a protein associating with lipid particles, that mainly functions in lipoprotein-mediated lipid transport between organs via the plasma and interstitial fluids. APOE is a core component of plasma lipoproteins and is involved in their production, conversion and clearance. Apolipoproteins are amphipathic molecules that interact both with lipids of the lipoprotein particle core and the aqueous environment of the plasma. As such, APOE associates with chylomicrons, chylomicron remnants, very low density lipoproteins (VLDL) and intermediate density lipoproteins (IDL) but shows a preferential binding to high-density lipoproteins (HDL). It also binds a wide range of cellular receptors including the LDL receptor/LDLR, the LDL receptor-related proteins LRP1, LRP2 and LRP8 and the very low-density lipoprotein receptor/VLDLR that mediate the cellular uptake of the APOE-containing lipoprotein particles. Finally, APOE also has a heparin-binding activity and binds heparan-sulfate proteoglycans on the surface of cells, a property that supports the capture and the receptor-mediated uptake of APOE-containing lipoproteins by cells. A main function of APOE is to mediate lipoprotein clearance through the uptake of chylomicrons, VLDLs, and HDLs by hepatocytes. APOE is also involved in the biosynthesis by the liver of VLDLs as well as their uptake by peripheral tissues ensuring the delivery of triglycerides and energy storage in muscle, heart and adipose tissues. By participating in the lipoprotein-mediated distribution of lipids among tissues, APOE plays a critical role in plasma and tissues lipid homeostasis. APOE is also involved in two steps of reverse cholesterol transport, the HDLs-mediated transport of cholesterol from peripheral tissues to the liver, and thereby plays an important role in cholesterol homeostasis. First, it is functionally associated with ABCA1 in the biogenesis of HDLs in tissues. Second, it is enriched in circulating HDLs and mediates their uptake by hepatocytes. APOE also plays an important role in lipid transport in the central nervous system, regulating neuron survival and sprouting. This is Apolipoprotein E (APOE) from Neomonachus schauinslandi (Hawaiian monk seal).